The primary structure comprises 1301 residues: Zinc finger protein 532 (1301 aa).

3 disordered regions span residues 26–206 (PKAA…RETE), 223–266 (AEDK…SSSK), and 281–366 (KAAS…IKTI). Residues 32–52 (SGHDDHESHMKQNAHGEDDSH) are compositionally biased toward basic and acidic residues. A compositionally biased stretch (polar residues) spans 84–101 (PTGNGLHNGFLTASSLDS). Over residues 102–111 (YSKDGAKSLK) the composition is skewed to basic and acidic residues. A compositionally biased stretch (polar residues) spans 122–133 (KDSTFSQFSPIS). Phosphoserine occurs at positions 130, 133, and 134. A compositionally biased stretch (acidic residues) spans 136–151 (EEFDDDEKIEVDDPPD). Over residues 158–170 (SFRSNVLTGSAPQ) the composition is skewed to polar residues. Lys175 is modified (N6-acetyllysine). Over residues 182 to 195 (ENSSKTGLSTSGNV) the composition is skewed to polar residues. 2 stretches are compositionally biased toward basic and acidic residues: residues 196 to 206 (EKNKAVKRETE) and 223 to 250 (AEDKLKESSDKVLENRVLDGKLSSEKND). Thr205 is modified (phosphothreonine). A phosphoserine mark is found at Ser252, Ser307, and Ser314. Residues 303 to 315 (EVNDSPRAADKSP) are compositionally biased toward basic and acidic residues. Low complexity predominate over residues 337–359 (SISSENSSKGSPSSPAGSTPAIP). Ser434 is modified (phosphoserine). Residues Lys459 and Lys516 each participate in a glycyl lysine isopeptide (Lys-Gly) (interchain with G-Cter in SUMO2) cross-link. Residues 616–635 (YKCLECGDSFALEKSLTQHY) form a C2H2-type 1; degenerate zinc finger. The C2H2-type 2; degenerate zinc finger occupies 754–779 (LKCLECNEVFQDETSLATHFQQAADT). 5 consecutive C2H2-type zinc fingers follow at residues 783–805 (KTCTICQMLLPNQCSYASHQRIH), 842–865 (FRCVHCNVVYSDVAALKSHIQGSH), 870–893 (YKCPICPMAFKSAPSTHSHAYTQH), 905–927 (YKCSMCDTVFTLQTLLYRHFDQH), and 936–959 (FKCPDCSLLYAQKQLMMDHIKSMH). Residue Lys980 forms a Glycyl lysine isopeptide (Lys-Gly) (interchain with G-Cter in SUMO2) linkage. The tract at residues 983-1017 (TQNSANQNKEDTKSMNGKEKLEKKSPSPVKKSMET) is disordered. Residues 990–1017 (NKEDTKSMNGKEKLEKKSPSPVKKSMET) are compositionally biased toward basic and acidic residues. C2H2-type zinc fingers lie at residues 1025–1048 (WTCWECDCLFMQRDVYISHVRKEH) and 1055–1078 (HPCRQCDKSFSSSHSLCRHNRIKH). The segment at 1085-1111 (YACSHCPDSRRTFTKRLMLEKHVQLMH) adopts a C2H2-type 10; degenerate zinc-finger fold. Position 1140 is a phosphoserine (Ser1140). Residues Lys1144 and Lys1167 each participate in a glycyl lysine isopeptide (Lys-Gly) (interchain with G-Cter in SUMO2) cross-link. The segment at 1203–1226 (YQCRECGLCYTSHVSLSRHLFIVH) adopts a C2H2-type 11 zinc-finger fold. Residues 1230 to 1263 (EPQPVSKQNGAGEDNQQENKPSHEDESPDGAVSD) form a disordered region. The C2H2-type 12 zinc-finger motif lies at 1264 to 1286 (RKCKVCAKTFETEAALNTHMRTH).

This sequence belongs to the krueppel C2H2-type zinc-finger protein family.

The protein localises to the nucleus. Its function is as follows. May be involved in transcriptional regulation. The protein is Zinc finger protein 532 (ZNF532) of Homo sapiens (Human).